The chain runs to 263 residues: Purine nucleoside phosphorylase SAV1187 (263 aa).

H79, C124, and H141 together coordinate Zn(2+).

The protein belongs to the purine nucleoside phosphorylase YfiH/LACC1 family. Homodimer. Cu(2+) is required as a cofactor. Requires Zn(2+) as cofactor.

The catalysed reaction is adenosine + phosphate = alpha-D-ribose 1-phosphate + adenine. It catalyses the reaction S-methyl-5'-thioadenosine + phosphate = 5-(methylsulfanyl)-alpha-D-ribose 1-phosphate + adenine. The enzyme catalyses inosine + phosphate = alpha-D-ribose 1-phosphate + hypoxanthine. It carries out the reaction adenosine + H2O + H(+) = inosine + NH4(+). Functionally, purine nucleoside enzyme that catalyzes the phosphorolysis of adenosine and inosine nucleosides, yielding D-ribose 1-phosphate and the respective free bases, adenine and hypoxanthine. Also catalyzes the phosphorolysis of S-methyl-5'-thioadenosine into adenine and S-methyl-5-thio-alpha-D-ribose 1-phosphate. Also has adenosine deaminase activity. The protein is Purine nucleoside phosphorylase SAV1187 of Staphylococcus aureus (strain Mu50 / ATCC 700699).